Reading from the N-terminus, the 317-residue chain is Melanocyte-stimulating hormone receptor (317 aa).

Residues 1-37 (MPAQGSQRGLLGAVNFTPTATPHLRPAANQTGPQCLE) lie on the Extracellular side of the membrane. N-linked (GlcNAc...) asparagine glycosylation occurs at N29. A helical membrane pass occupies residues 38-63 (VSVPDGLFLCLGLVSLVENTLVVAAI). Residues 64 to 72 (AKNRNLHSP) lie on the Cytoplasmic side of the membrane. The chain crosses the membrane as a helical span at residues 73-93 (MYCFICCLALSDLLVSVSNLL). At 94–118 (ETAVLLLLEVGALAAQATVVQQLGN) the chain is on the extracellular side. A helical transmembrane segment spans residues 119–140 (VIDVLICSSMVSSLCSLGAIAM). Residues 141–163 (DRYISIFYALRYHSIVTLARARR) are Cytoplasmic-facing. A helical transmembrane segment spans residues 164–183 (AIAAVWAASILSSTLFITYY). Residues 184–191 (DRTAALLC) are Extracellular-facing. The chain crosses the membrane as a helical span at residues 192-211 (LVVFFLAMLVLMALLYVHML). Residues 212–240 (IQACQHAQAIARLHKRQHPVQQGWGLKGA) are Cytoplasmic-facing. A helical transmembrane segment spans residues 241-266 (ATLTILLGVFFLCWGPFFLHLTLIAV). At 267 to 279 (CPQHPTCSCIFKN) the chain is on the extracellular side. The chain crosses the membrane as a helical span at residues 280-300 (FRLFLALIICNTIVDPLIYAF). Over 301-317 (RSQELRRTLKEVLLFSW) the chain is Cytoplasmic.

Belongs to the G-protein coupled receptor 1 family. In terms of assembly, interacts with MGRN1, but does not undergo MGRN1-mediated ubiquitination; this interaction competes with GNAS-binding and thus inhibits agonist-induced cAMP production. Interacts with OPN3; the interaction results in a decrease in MC1R-mediated cAMP signaling and ultimately a decrease in melanin production in melanocytes.

It is found in the cell membrane. Receptor for MSH (alpha, beta and gamma) and ACTH. The activity of this receptor is mediated by G proteins which activate adenylate cyclase. Mediates melanogenesis, the production of eumelanin (black/brown) and phaeomelanin (red/yellow), via regulation of cAMP signaling in melanocytes. In Eulemur fulvus fulvus (Brown lemur), this protein is Melanocyte-stimulating hormone receptor (MC1R).